The primary structure comprises 161 residues: Aklanonic acid methyl ester cyclase DauD (161 aa).

Gln106 provides a ligand contact to substrate. The interval 137 to 161 (WPTPEGWRPCPPPPRRRHDRSTDTP) is disordered.

The protein belongs to the polyketide cyclase DnrD family. As to quaternary structure, homotetramer.

The enzyme catalyses methyl aklanonate = aklaviketone. It functions in the pathway antibiotic biosynthesis; daunorubicin biosynthesis. It participates in antibiotic biosynthesis; carminomycin biosynthesis. The protein operates within antibiotic biosynthesis; rhodomycin biosynthesis. Its pathway is antibiotic biosynthesis; aclacinomycin biosynthesis. Involved in the biosynthesis of aklavinone which is an important precursor common to the formation of the clinically significant anthracyclines such as carminomycin, daunorubicin (daunomycin), rhodomycin, aclacinomycin T (aklavin) and aclacinomycin A (aclarubicin). These compounds are aromatic polyketide antibiotics that exhibit high cytotoxicity and are widely applied in the chemotherapy of a variety of cancers. Catalyzes the cyclization of aklanonic acid methyl ester to yield aklaviketone. The polypeptide is Aklanonic acid methyl ester cyclase DauD (dauD) (Streptomyces sp. (strain C5)).